Reading from the N-terminus, the 164-residue chain is C-phycoerythrin class 1 subunit alpha (164 aa).

(2R,3E)-phycoerythrobilin is bound by residues Cys-82 and Cys-139.

This sequence belongs to the phycobiliprotein family. Heterodimer of an alpha and a beta chain. Post-translationally, contains two covalently linked phycoerythrobilin chromophores.

The protein localises to the cellular thylakoid membrane. In terms of biological role, light-harvesting photosynthetic bile pigment-protein from the phycobiliprotein complex. This is C-phycoerythrin class 1 subunit alpha (cpeA) from Synechococcus sp. (strain WH8020).